Here is a 234-residue protein sequence, read N- to C-terminus: Protein SOP4 (234 aa).

Residues 1 to 18 (MFSQIVLLLSAFIYVVSA) form the signal peptide. At 19 to 188 (TARRGTIKGR…VGNILNSRWK (170 aa)) the chain is on the lumenal side. 5 N-linked (GlcNAc...) asparagine glycosylation sites follow: N35, N53, N85, N115, and N170. A helical membrane pass occupies residues 189 to 209 (LAGVITLIALVVFPIIVEKLD). At 210–234 (PETARAIREEAKRKQREKYAAVASK) the chain is on the cytoplasmic side.

Belongs to the SOP4 family.

Its subcellular location is the endoplasmic reticulum membrane. Its function is as follows. Involved in the export of PMA1, possibly through the monitoring or assisting of PMA1 folding and acquisition of competence to enter vesicles. This chain is Protein SOP4 (SOP4), found in Saccharomyces cerevisiae (strain YJM789) (Baker's yeast).